Reading from the N-terminus, the 265-residue chain is Zinc import ATP-binding protein ZnuC (265 aa).

The 216-residue stretch at 6–221 folds into the ABC transporter domain; that stretch reads IRLEQVAVTL…PAFVELFGKN (216 aa). 38–45 lines the ATP pocket; the sequence is GPNGAGKT. The tract at residues 245 to 265 is disordered; sequence DAPATSSHTHTHVHGDHCKHG.

The protein belongs to the ABC transporter superfamily. Zinc importer (TC 3.A.1.15.5) family. The complex is composed of two ATP-binding proteins (ZnuC), two transmembrane proteins (ZnuB) and a solute-binding protein (ZnuA).

It is found in the cell inner membrane. The catalysed reaction is Zn(2+)(out) + ATP(in) + H2O(in) = Zn(2+)(in) + ADP(in) + phosphate(in) + H(+)(in). In terms of biological role, part of the ABC transporter complex ZnuABC involved in zinc import. Responsible for energy coupling to the transport system. This chain is Zinc import ATP-binding protein ZnuC, found in Pseudomonas savastanoi pv. phaseolicola (strain 1448A / Race 6) (Pseudomonas syringae pv. phaseolicola (strain 1448A / Race 6)).